Consider the following 256-residue polypeptide: DNA repair protein RecO (256 aa).

This sequence belongs to the RecO family.

Its function is as follows. Involved in DNA repair and RecF pathway recombination. The protein is DNA repair protein RecO of Bacillus pumilus (strain SAFR-032).